Consider the following 276-residue polypeptide: Large ribosomal subunit protein uL2 (276 aa).

Disordered regions lie at residues 1-61 (MALK…HKQK) and 224-276 (AMNP…KKKN). The segment covering 15-31 (GRIDLRKDEITAQKPEK) has biased composition (basic and acidic residues).

It belongs to the universal ribosomal protein uL2 family. Part of the 50S ribosomal subunit. Forms a bridge to the 30S subunit in the 70S ribosome.

In terms of biological role, one of the primary rRNA binding proteins. Required for association of the 30S and 50S subunits to form the 70S ribosome, for tRNA binding and peptide bond formation. It has been suggested to have peptidyltransferase activity; this is somewhat controversial. Makes several contacts with the 16S rRNA in the 70S ribosome. This is Large ribosomal subunit protein uL2 from Treponema denticola (strain ATCC 35405 / DSM 14222 / CIP 103919 / JCM 8153 / KCTC 15104).